Consider the following 439-residue polypeptide: Xaa-Pro dipeptidase (439 aa).

Mn(2+) contacts are provided by aspartate 244, aspartate 255, histidine 335, glutamate 380, and glutamate 419.

The protein belongs to the peptidase M24B family. Bacterial-type prolidase subfamily. The cofactor is Mn(2+).

The catalysed reaction is Xaa-L-Pro dipeptide + H2O = an L-alpha-amino acid + L-proline. Its function is as follows. Splits dipeptides with a prolyl residue in the C-terminal position. In Shewanella sp. (strain ANA-3), this protein is Xaa-Pro dipeptidase.